The primary structure comprises 252 residues: DNA-directed RNA polymerase III subunit rpc8 (252 aa).

Residues 214–252 (WTNQSAGDDDENEEDGGENQDDEVAEDDGGEEPTIEEDE) are disordered. Residues 220–252 (GDDDENEEDGGENQDDEVAEDDGGEEPTIEEDE) show a composition bias toward acidic residues.

The protein belongs to the eukaryotic RPB7/RPC8 RNA polymerase subunit family. In terms of assembly, component of the RNA polymerase III (Pol III) complex consisting of several subunits.

The protein resides in the nucleus. DNA-dependent RNA polymerase catalyzes the transcription of DNA into RNA using the four ribonucleoside triphosphates as substrates. The polypeptide is DNA-directed RNA polymerase III subunit rpc8 (polr3h-1) (Dictyostelium discoideum (Social amoeba)).